The following is a 598-amino-acid chain: Nuclear receptor subfamily 4 group A member 2 (598 aa).

The disordered stretch occupies residues 1–22; it reads MPCVQAQYGSSPQGASPASQSY. Residues 8 to 22 show a composition bias toward low complexity; that stretch reads YGSSPQGASPASQSY. Residues 260 to 335 constitute a DNA-binding region (nuclear receptor); sequence EGLCAVCGDN…VGMVKEVVRT (76 aa). 2 consecutive NR C4-type zinc fingers follow at residues 263–283 and 299–323; these read CAVCGDNAACQHYGVRTCEGC and CLANKNCPVDKRRRNRCQYCRFQKC. Residues 287–314 carry the Bipartite nuclear localization signal (NLS1) motif; that stretch reads FKRTVQKNAKYVCLANKNCPVDKRRRNR. The interval 337-361 is disordered; sequence SLKGRRGRLPSKPKSPQDPSPPSPP. Residues 338–350 carry the Nuclear localization signal (NLS1) motif; sequence LKGRRGRLPSKPK. Residues 352 to 361 are compositionally biased toward pro residues; sequence PQDPSPPSPP. Residues 360 to 595 form the NR LBD domain; that stretch reads PPVSLISALV…AIIDKLFLDT (236 aa). The nuclear export sequence (NES1) motif lies at 443-452; the sequence is FLELFVLRLA. A nuclear export sequence (NES2) motif is present at residues 568–577; sequence QGLQRIFYLK.

The protein belongs to the nuclear hormone receptor family. NR4 subfamily. Interacts with SFPQ, NCOR2, SIN3A and HADC1. The interaction with NCOR2 increases in the absence of PITX3. Interacts with PER2. As to expression, shows a ubiquitous distribution in the cerebral cortex, hippocampus, thalamus, amygdala, and midbrain. Expression increases in prenatally stressed adult offspring in the ventral tegmental area, whereas no changes are observed in the substantia nigra area (at protein level). Not expressed in quiescent liver but is rapidly induced following partial hepatectomy and is specific to hepatic growth as it is not induced in other mitogen-treated cells. Expressed at very low levels in the lung, spleen and stomach and at high levels in the brain.

It is found in the cytoplasm. Its subcellular location is the nucleus. Transcriptional regulator which is important for the differentiation and maintenance of meso-diencephalic dopaminergic (mdDA) neurons during development. It is crucial for expression of a set of genes such as SLC6A3, SLC18A2, TH and DRD2 which are essential for development of mdDA neurons. May confer liver-specific regulation of delayed-early genes induced later in the G1 phase of regeneration along with NR4A1. This Rattus norvegicus (Rat) protein is Nuclear receptor subfamily 4 group A member 2 (Nr4a2).